The sequence spans 882 residues: Translation initiation factor IF-2 (882 aa).

Positions Y57–T211 are disordered. The span at T104–Q115 shows a compositional bias: basic and acidic residues. The span at R199 to T211 shows a compositional bias: basic residues. Residues E381–K550 form the tr-type G domain. Positions G390–T397 are G1. G390 to T397 contacts GTP. The interval G415–H419 is G2. The interval D436–G439 is G3. GTP-binding positions include D436 to H440 and N490 to D493. The interval N490–D493 is G4. The interval S526–K528 is G5.

This sequence belongs to the TRAFAC class translation factor GTPase superfamily. Classic translation factor GTPase family. IF-2 subfamily.

Its subcellular location is the cytoplasm. Functionally, one of the essential components for the initiation of protein synthesis. Protects formylmethionyl-tRNA from spontaneous hydrolysis and promotes its binding to the 30S ribosomal subunits. Also involved in the hydrolysis of GTP during the formation of the 70S ribosomal complex. In Helicobacter hepaticus (strain ATCC 51449 / 3B1), this protein is Translation initiation factor IF-2.